A 632-amino-acid polypeptide reads, in one-letter code: Probable potassium transport system protein Kup (632 aa).

12 consecutive transmembrane segments (helical) span residues 19-39 (LLCL…PLYV), 57-77 (VIGI…LKYV), 111-131 (ILFL…VITP), 147-167 (PLLQ…LFML), 175-195 (IGAL…LVGL), 213-233 (AFAF…AVVL), 257-277 (WYGG…ALLL), 286-306 (PFFL…ATAA), 347-367 (IYIP…VLGF), 376-396 (AYGV…FFVL), 404-424 (FLLG…FFSA), and 429-449 (VAQG…IMIT).

The protein belongs to the HAK/KUP transporter (TC 2.A.72) family.

The protein resides in the cell inner membrane. It carries out the reaction K(+)(in) + H(+)(in) = K(+)(out) + H(+)(out). Functionally, transport of potassium into the cell. Likely operates as a K(+):H(+) symporter. This is Probable potassium transport system protein Kup from Nitrosospira multiformis (strain ATCC 25196 / NCIMB 11849 / C 71).